The sequence spans 355 residues: MSLCTLAINLSAIKNNYFLLQDICKTSLVGAVVKADGYGLGAVQISKALIEENCRHFFVASSEEGVNVRKALGIDVNILVLNGVFEHDALELIEYNLIPILNNLKQIEIWQQFGNLKNLLLPCYLHFNTGINRLGLSSNEIEQLINNRDLLKGLNLQYIISHLAISEEIDNPYNLEQLNKFKAYLRYFPSIKASLANSGGIFLGQDYHFDLVRPGAALYGLNPLMQNPVTLKAPIIHLQNLTLDSHIGYNMTFTTKRDSVIATLPLGYADGYSRNFSNQGKVFINGRSVPIVGRVSMDLINIDVTDLPPSDIFLGQEVEIIGNHCTPDKIASIIGTIGYEVLTSLGNRYRRKYTR.

The Proton acceptor; specific for D-alanine role is filled by Lys-34. Lys-34 is modified (N6-(pyridoxal phosphate)lysine). Arg-133 serves as a coordination point for substrate. Tyr-249 (proton acceptor; specific for L-alanine) is an active-site residue. Met-297 contributes to the substrate binding site.

This sequence belongs to the alanine racemase family. The cofactor is pyridoxal 5'-phosphate.

It catalyses the reaction L-alanine = D-alanine. It participates in amino-acid biosynthesis; D-alanine biosynthesis; D-alanine from L-alanine: step 1/1. Functionally, catalyzes the interconversion of L-alanine and D-alanine. May also act on other amino acids. The sequence is that of Alanine racemase (alr) from Rickettsia canadensis (strain McKiel).